A 327-amino-acid polypeptide reads, in one-letter code: Phenylalanine--tRNA ligase alpha subunit (327 aa).

Glu252 contributes to the Mg(2+) binding site.

Belongs to the class-II aminoacyl-tRNA synthetase family. Phe-tRNA synthetase alpha subunit type 1 subfamily. In terms of assembly, tetramer of two alpha and two beta subunits. Requires Mg(2+) as cofactor.

Its subcellular location is the cytoplasm. It carries out the reaction tRNA(Phe) + L-phenylalanine + ATP = L-phenylalanyl-tRNA(Phe) + AMP + diphosphate + H(+). This Hamiltonella defensa subsp. Acyrthosiphon pisum (strain 5AT) protein is Phenylalanine--tRNA ligase alpha subunit.